Here is an 86-residue protein sequence, read N- to C-terminus: uncharacterized protein (86 aa).

The N-terminal stretch at 1–31 (MKQKLLLSGLAVSTVGITSYLLKDPSNRQKA) is a signal peptide. A disordered region spans residues 46–69 (PDMETFPVDKAGHPDPQDIEDNKM). Basic and acidic residues predominate over residues 55-69 (KAGHPDPQDIEDNKM).

This is an uncharacterized protein from Bacillus subtilis (strain 168).